The sequence spans 305 residues: Nitrogen assimilation regulatory protein nac (305 aa).

Positions 1 to 58 (MNFRRLKYFVKIVDIGSLTQAAEVLHIAQPALSQQVATLEGELNQQLLIRTKRGVTPT) constitute an HTH lysR-type domain. Positions 18–37 (LTQAAEVLHIAQPALSQQVA) form a DNA-binding region, H-T-H motif.

It belongs to the LysR transcriptional regulatory family.

Transcriptional activator for the hut, put and ure operons and repressor for the gdh and gltB operons in response to nitrogen limitation. Negative regulator of its own expression. This chain is Nitrogen assimilation regulatory protein nac (nac), found in Escherichia coli (strain K12).